We begin with the raw amino-acid sequence, 83 residues long: Small ribosomal subunit protein bS16 (83 aa).

This sequence belongs to the bacterial ribosomal protein bS16 family.

The chain is Small ribosomal subunit protein bS16 from Albidiferax ferrireducens (strain ATCC BAA-621 / DSM 15236 / T118) (Rhodoferax ferrireducens).